The chain runs to 299 residues: Pyridoxal 5'-phosphate synthase subunit PdxS (299 aa).

Asp24 provides a ligand contact to D-ribose 5-phosphate. Lys81 functions as the Schiff-base intermediate with D-ribose 5-phosphate in the catalytic mechanism. Residue Gly153 participates in D-ribose 5-phosphate binding. Arg165 serves as a coordination point for D-glyceraldehyde 3-phosphate. Residues Gly219 and 240–241 each bind D-ribose 5-phosphate; that span reads GS.

The protein belongs to the PdxS/SNZ family. As to quaternary structure, in the presence of PdxT, forms a dodecamer of heterodimers.

The enzyme catalyses aldehydo-D-ribose 5-phosphate + D-glyceraldehyde 3-phosphate + L-glutamine = pyridoxal 5'-phosphate + L-glutamate + phosphate + 3 H2O + H(+). It participates in cofactor biosynthesis; pyridoxal 5'-phosphate biosynthesis. Its function is as follows. Catalyzes the formation of pyridoxal 5'-phosphate from ribose 5-phosphate (RBP), glyceraldehyde 3-phosphate (G3P) and ammonia. The ammonia is provided by the PdxT subunit. Can also use ribulose 5-phosphate and dihydroxyacetone phosphate as substrates, resulting from enzyme-catalyzed isomerization of RBP and G3P, respectively. The chain is Pyridoxal 5'-phosphate synthase subunit PdxS from Methanococcus maripaludis (strain C7 / ATCC BAA-1331).